Consider the following 247-residue polypeptide: CDP-diacylglycerol pyrophosphatase (247 aa).

A helical transmembrane segment spans residues 5-22; it reads IVLALVVSVAVAGGWLWM.

It belongs to the Cdh family.

The protein resides in the cell inner membrane. It carries out the reaction a CDP-1,2-diacyl-sn-glycerol + H2O = a 1,2-diacyl-sn-glycero-3-phosphate + CMP + 2 H(+). The protein operates within phospholipid metabolism; CDP-diacylglycerol degradation; phosphatidate from CDP-diacylglycerol: step 1/1. This Enterobacter sp. (strain 638) protein is CDP-diacylglycerol pyrophosphatase.